The primary structure comprises 272 residues: MKRFDYLTPVGFVLGTIIIVIGIISGSGVSGFRSFLDLTSFFIVTGGLCAAVFISFPPSELKKAPSVLKQAFIRQEDNVKDLVKTFVSLSDHARKHGLLSLDDQAREIKDPFLKKGLLLAIDGWDEETIRLVMDSEIAAMEERHRKGRRVFEKAGEFAPAWGMIGTLVGLVLMLKNLNDPHMLGPNMAIALLTTLYGSLLANMVFNPIAAKLEEKTESEIFIKQVMVEGIIGVQSGKNPRNLESQLVVFSSREEWQKQPKQVKTKKGSVHEA.

Transmembrane regions (helical) follow at residues 9–29, 38–58, 154–174, and 188–208; these read PVGF…GSGV, LTSF…SFPP, AGEF…VLML, and AIAL…FNPI. The Cytoplasmic portion of the chain corresponds to 209–272; sequence AAKLEEKTES…KTKKGSVHEA (64 aa).

It belongs to the MotA family.

It is found in the cell membrane. Its function is as follows. May be involved in some transport function. This is an uncharacterized protein from Bacillus subtilis (strain 168).